The following is a 474-amino-acid chain: N-lysine methyltransferase SETD6 (474 aa).

Serine 14 bears the Phosphoserine mark. Residues 63-287 form the SET domain; the sequence is PKVLVSRQGT…KGHEIFNTYG (225 aa). Lysine 64 carries the post-translational modification N6-methylated lysine; by autocatalysis. 74 to 76 is an S-adenosyl-L-methionine binding site; that stretch reads AGY. A substrate-binding site is contributed by tryptophan 123. Lysine 180 is subject to N6-methylated lysine; by autocatalysis. Tyrosine 224 lines the S-adenosyl-L-methionine pocket. Substrate-binding residues include serine 225 and glutamine 227. S-adenosyl-L-methionine-binding positions include 252-253 and tyrosine 298; that span reads NH. The residue at position 373 (lysine 373) is an N6-methylated lysine; by autocatalysis.

It belongs to the class V-like SAM-binding methyltransferase superfamily. Histone-lysine methyltransferase family. SETD6 subfamily. In terms of assembly, monomer, homodimer and homotrimer; these structures are stabilized in the presence of S-adenosyl-L-methionine (SAM). In terms of processing, automethylated.

The protein resides in the nucleus. The enzyme catalyses L-lysyl-[protein] + S-adenosyl-L-methionine = N(6)-methyl-L-lysyl-[protein] + S-adenosyl-L-homocysteine + H(+). It carries out the reaction L-lysyl(8)-[histone H2AZ] + S-adenosyl-L-methionine = N(6)-methyl-L-lysyl(8)-[histone H2AZ] + S-adenosyl-L-homocysteine + H(+). Its function is as follows. Protein-lysine N-methyltransferase. Monomethylates 'Lys-310' of the RELA subunit of NF-kappa-B complex, leading to down-regulation of NF-kappa-B transcription factor activity. Monomethylates 'Lys-8' of H2AZ (H2AZK8me1). Required for the maintenance of embryonic stem cell self-renewal. Methylates PAK4. This Rattus norvegicus (Rat) protein is N-lysine methyltransferase SETD6 (Setd6).